We begin with the raw amino-acid sequence, 514 residues long: 2,3-bisphosphoglycerate-independent phosphoglycerate mutase (514 aa).

Aspartate 14 and serine 64 together coordinate Mn(2+). Serine 64 serves as the catalytic Phosphoserine intermediate. Substrate contacts are provided by residues histidine 125, 155–156, arginine 187, arginine 193, 263–266, and lysine 336; these read RD and RADR. Aspartate 403, histidine 407, aspartate 444, histidine 445, and histidine 463 together coordinate Mn(2+).

The protein belongs to the BPG-independent phosphoglycerate mutase family. In terms of assembly, monomer. Requires Mn(2+) as cofactor.

It catalyses the reaction (2R)-2-phosphoglycerate = (2R)-3-phosphoglycerate. The protein operates within carbohydrate degradation; glycolysis; pyruvate from D-glyceraldehyde 3-phosphate: step 3/5. In terms of biological role, catalyzes the interconversion of 2-phosphoglycerate and 3-phosphoglycerate. This is 2,3-bisphosphoglycerate-independent phosphoglycerate mutase from Escherichia coli O1:K1 / APEC.